A 272-amino-acid chain; its full sequence is FAS1 domain-containing protein YDR262W (272 aa).

The N-terminal stretch at 1 to 26 (MIFNLPVSVLLYFSLIWAMEPSFVRG) is a signal peptide. The FAS1 domain occupies 100–269 (PLSLESKLSL…GVILMVDFTL (170 aa)).

It is found in the vacuole. This chain is FAS1 domain-containing protein YDR262W, found in Saccharomyces cerevisiae (strain ATCC 204508 / S288c) (Baker's yeast).